The following is a 146-amino-acid chain: Large ribosomal subunit protein uL15 (146 aa).

The segment at 1–58 (MRLHELHPAPGSRPRATRVGRGIGSGLGKTSGRGHKGQKARSGGGVRRGFEGGQMPLT) is disordered. Over residues 21 to 31 (RGIGSGLGKTS) the composition is skewed to gly residues.

The protein belongs to the universal ribosomal protein uL15 family. Part of the 50S ribosomal subunit.

Binds to the 23S rRNA. This chain is Large ribosomal subunit protein uL15, found in Moorella thermoacetica (strain ATCC 39073 / JCM 9320).